The sequence spans 410 residues: Arginine deiminase (410 aa).

Cys-400 functions as the Amidino-cysteine intermediate in the catalytic mechanism.

It belongs to the arginine deiminase family.

It is found in the cytoplasm. The enzyme catalyses L-arginine + H2O = L-citrulline + NH4(+). The protein operates within amino-acid degradation; L-arginine degradation via ADI pathway; carbamoyl phosphate from L-arginine: step 1/2. This Bacillus cereus (strain G9842) protein is Arginine deiminase.